We begin with the raw amino-acid sequence, 46 residues long: Esculentin-1GRa (46 aa).

In terms of tissue distribution, expressed by the skin glands.

It is found in the secreted. Its function is as follows. Antimicrobial peptide active against the Gram-positive bacterium S.aureus (MIC=12.5 uM) and against the Gram-negative bacterium E.coli (MIC=6 uM). Has no antifungal activity against C.albicans. Shows hemolytic activity against human erythrocytes only at high concentrations (LC(50)=210 uM). This is Esculentin-1GRa from Odorrana grahami (Yunnanfu frog).